The sequence spans 160 residues: MFRQSLRSIARTRTGTIGVRTYAEAVNPDVLKVSLVAPHQAIFTNKEVSQVNLPASSGEMGVLANHVPTVEELAPGVVEVIESSGTASKYFVSGGFASILPGSKLSISTVEAHPLDAFSSENIKSLLAEAQKNASSADETVAAEAAIEIEVLEALQAAVH.

The transit peptide at 1–22 directs the protein to the mitochondrion; it reads MFRQSLRSIARTRTGTIGVRTY.

F-type ATP synthases have 2 components, the catalytic core F(1) and the membrane-embedded component F(0), linked together by a central stalk and a peripheral stalk. The central stalk, also called rotor shaft, is often seen as part of F(1). The peripheral stalk is seen as part of F(0). F(0) contains the membrane channel next to the rotor. F-type ATP synthases form dimers but each monomer functions independently in ATP generation. The dimer consists of 18 different polypeptides: ATP1 (subunit alpha, part of F(1), 3 molecules per monomer), ATP2 (subunit beta, part of F(1), 3 molecules per monomer), ATP3 (subunit gamma, part of the central stalk), ATP4 (subunit b, part of the peripheral stalk), ATP5/OSCP (subunit 5/OSCP, part of the peripheral stalk), ATP6 (subunit a, part of the peripheral stalk), ATP7 (subunit d, part of the peripheral stalk), ATP8 (subunit 8, part of the peripheral stalk), OLI1 (subunit c, part of the rotor, 10 molecules per monomer), ATP14 (subunit h, part of the peripheral stalk), ATP15 (subunit epsilon, part of the central stalk), ATP16 (subunit delta, part of the central stalk), ATP17 (subunit f, part of the peripheral stalk), ATP18 (subunit i/j, part of the peripheral stalk). Dimer-specific subunits are ATP19 (subunit k, at interface between monomers), ATP20 (subunit g, at interface between monomers), TIM11 (subunit e, at interface between monomers). Also contains subunit L.

It is found in the mitochondrion inner membrane. Mitochondrial membrane ATP synthase (F(1)F(0) ATP synthase or Complex V) produces ATP from ADP in the presence of a proton gradient across the membrane which is generated by electron transport complexes of the respiratory chain. F-type ATP synthases consist of two structural domains, F(1) - containing the extramembraneous catalytic core, and F(0) - containing the membrane proton channel, linked together by a central stalk and a peripheral stalk. During catalysis, ATP synthesis in the catalytic domain of F(1) is coupled via a rotary mechanism of the central stalk subunits to proton translocation. Part of the complex F(1) domain and the central stalk which is part of the complex rotary element. Rotation of the central stalk against the surrounding alpha/ATP1(3)beta/ATP2(3) subunits leads to hydrolysis of ATP in three separate catalytic sites on the beta/ATP2 subunits. This Pichia angusta (Yeast) protein is ATP synthase subunit delta, mitochondrial.